We begin with the raw amino-acid sequence, 359 residues long: Mitochondrial glutathione transporter SLC25A39 (359 aa).

The Mitochondrial intermembrane portion of the chain corresponds to Met-1–Gln-18. Solcar repeat units follow at residues Ile-13–Phe-149, His-157–Gln-241, and Ala-251–Phe-346. The helical transmembrane segment at Met-19–Val-39 threads the bilayer. The Mitochondrial matrix portion of the chain corresponds to Lys-40–Arg-119. [2Fe-2S] cluster contacts are provided by Cys-72, Cys-76, Cys-86, and Cys-92. Residues Ser-120–Phe-140 form a helical membrane-spanning segment. Residues Thr-141–Pro-162 are Mitochondrial intermembrane-facing. Residues Leu-163 to Val-183 form a helical membrane-spanning segment. The Mitochondrial matrix portion of the chain corresponds to Arg-184–Ser-212. Residues Leu-213–Phe-233 traverse the membrane as a helical segment. Residues Asn-234–Phe-253 are Mitochondrial intermembrane-facing. The chain crosses the membrane as a helical span at residues Thr-254–Phe-274. Topologically, residues Asp-275 to Lys-316 are mitochondrial matrix. The chain crosses the membrane as a helical span at residues Gly-317 to Ile-337. At Ser-338 to Leu-359 the chain is on the mitochondrial intermembrane side.

This sequence belongs to the mitochondrial carrier (TC 2.A.29) family. Post-translationally, cleaved and degraded by AFG3L2; degradation by AFG3L2 is regulated by the ability of SLC25A39 to bind iron-sulfur. In absence of mitochondrial glutathione, SLC25A39 binds iron-sulfur, preventing cleavage and degradation by AFG3L2. The presence of mitochondrial glutathione prevents iron-sulfur-binding to SLC25A39, promoting cleavage and degradation by AFG3L2.

Its subcellular location is the mitochondrion inner membrane. The catalysed reaction is glutathione(in) = glutathione(out). The activity of SLC25A39 is regulated by levels of mitochondrial glutathione via its ability to bind [2Fe-2S] iron-sulfur cluster. Upon physiological levels of mitochondrial glutathione, glutathione prevents iron-sulfur-binding to SLC25A39 promoting cleavage and degradation by AFG3L2. Upon depletion of mitochondrial glutathione, SLC25A39 binds iron-sulfur, preventing cleavage and degradation by AFG3L2. Functionally, mitochondrial transporter required for glutathione import into mitochondria. Glutathione, which plays key roles in oxidative metabolism, is produced exclusively in the cytosol and is imported in many organelles. Mitochondrial glutathione is required for the activity and stability of proteins containing iron-sulfur clusters, as well as erythropoiesis. Involved in the early steps of heme biosynthesis. The protein is Mitochondrial glutathione transporter SLC25A39 (slc25a39) of Danio rerio (Zebrafish).